Reading from the N-terminus, the 258-residue chain is Tritrans,polycis-undecaprenyl-diphosphate synthase (geranylgeranyl-diphosphate specific) (258 aa).

Asp37 is a catalytic residue. Asp37 is a binding site for Mg(2+). Residues 38–41 (GNRR), His54, and 82–84 (STE) contribute to the substrate site. Asn85 acts as the Proton acceptor in catalysis. Residues Phe86, Arg88, Arg207, and 213–215 (RIS) contribute to the substrate site. A Mg(2+)-binding site is contributed by Glu226.

The protein belongs to the UPP synthase family. Homodimer. It depends on Mg(2+) as a cofactor.

The enzyme catalyses geranylgeranyl diphosphate + 7 isopentenyl diphosphate = tri-trans,hepta-cis-undecaprenyl diphosphate + 7 diphosphate. Functionally, catalyzes the sequential condensation of isopentenyl diphosphate (IPP) with geranylgeranyl diphosphate (GGPP) to yield (2Z,6Z,10Z,14Z,18Z,22Z,26Z,30E,34E,38E)-undecaprenyl diphosphate (tritrans,heptacis-UPP). It is probably the precursor of glycosyl carrier lipids. This chain is Tritrans,polycis-undecaprenyl-diphosphate synthase (geranylgeranyl-diphosphate specific), found in Thermoplasma volcanium (strain ATCC 51530 / DSM 4299 / JCM 9571 / NBRC 15438 / GSS1).